We begin with the raw amino-acid sequence, 251 residues long: MKKAGLLFLVMIVIAVVAAGIGYWKLTGEESDTLRKIVLEECLPNQQQNQNPSPCAEVKPNAGYVVLKDLNGPLQYLLMPTYRINGTESPLLTDPSTPNFFWLAWQGRDFMSKKYGQPVPDRAVSLAINSRTGRTQNHFHIHISCIRPDVREQLDNNLANISSRWLPLPGGLRGHEYLARRVTESELVQRSPFMMLAEEVPEAREHMGSYGLAMVRQSDNSFVLLATQRNLLTLNRASAEEIQDHQCEILR.

Residues 4-24 (AGLLFLVMIVIAVVAAGIGYW) form a helical membrane-spanning segment.

Belongs to the Cdh family.

It is found in the cell inner membrane. It catalyses the reaction a CDP-1,2-diacyl-sn-glycerol + H2O = a 1,2-diacyl-sn-glycero-3-phosphate + CMP + 2 H(+). Its pathway is phospholipid metabolism; CDP-diacylglycerol degradation; phosphatidate from CDP-diacylglycerol: step 1/1. The protein is CDP-diacylglycerol pyrophosphatase of Escherichia coli O7:K1 (strain IAI39 / ExPEC).